The primary structure comprises 477 residues: Histidine permease HisP (477 aa).

The next 12 helical transmembrane spans lie at 16 to 36, 40 to 60, 86 to 106, 126 to 146, 156 to 176, 192 to 212, 238 to 258, 284 to 304, 337 to 359, 364 to 386, 408 to 428, and 437 to 457; these read ITMIALGGTIGTGLFLTSGAT, AGPWGAVLAYCFIGIMVYFVM, PAFGFALGWNYWLNGAITIAV, IFSGIATVLIFIINVMAVGAF, IKVITIVLFLAIGLLTIFGVL, HGFVGGISGFVGVLLIAGFSF, SIFWRILLFYIFSIIVIAAII, IGFAVAASVMNAVILTSVISS, IPFYALLATTIICFIAFLTGIFG, LFLIDLSSLTGFLAWLGISVSHI, WFPFGPIVALLMTGAIAINLD, and WGEGLALYAAIPIFIVLYFGY.

It belongs to the amino acid-polyamine-organocation (APC) superfamily. Amino acid transporter (AAT) (TC 2.A.3.1) family.

It is found in the cell membrane. Involved in histidine uptake. Has low affinity for arginine and lysine. Plays no significant role in the excretion of accumulated histidine. In Lactococcus lactis subsp. cremoris (strain MG1363), this protein is Histidine permease HisP.